The following is a 158-amino-acid chain: Transcription elongation factor GreA (158 aa).

Residues 45–72 (AEYHAAREQQSFIEGRIKQLEGELSHAE) are a coiled coil.

This sequence belongs to the GreA/GreB family.

In terms of biological role, necessary for efficient RNA polymerase transcription elongation past template-encoded arresting sites. The arresting sites in DNA have the property of trapping a certain fraction of elongating RNA polymerases that pass through, resulting in locked ternary complexes. Cleavage of the nascent transcript by cleavage factors such as GreA or GreB allows the resumption of elongation from the new 3'terminus. GreA releases sequences of 2 to 3 nucleotides. In Xylella fastidiosa (strain M12), this protein is Transcription elongation factor GreA.